Here is a 179-residue protein sequence, read N- to C-terminus: Large ribosomal subunit protein uL6 (179 aa).

Belongs to the universal ribosomal protein uL6 family. As to quaternary structure, part of the 50S ribosomal subunit.

In terms of biological role, this protein binds to the 23S rRNA, and is important in its secondary structure. It is located near the subunit interface in the base of the L7/L12 stalk, and near the tRNA binding site of the peptidyltransferase center. The sequence is that of Large ribosomal subunit protein uL6 from Mycoplasmopsis pulmonis (strain UAB CTIP) (Mycoplasma pulmonis).